A 428-amino-acid chain; its full sequence is 3-phosphoshikimate 1-carboxyvinyltransferase (428 aa).

Residues Lys22, Ser23, and Arg27 each coordinate 3-phosphoshikimate. Lys22 contacts phosphoenolpyruvate. 2 residues coordinate phosphoenolpyruvate: Gly96 and Arg124. Ser171, Ser172, Gln173, Ser198, Asp311, and Lys338 together coordinate 3-phosphoshikimate. Gln173 serves as a coordination point for phosphoenolpyruvate. Asp311 serves as the catalytic Proton acceptor. Residues Arg342 and Arg383 each coordinate phosphoenolpyruvate.

It belongs to the EPSP synthase family. In terms of assembly, monomer.

The protein localises to the cytoplasm. It catalyses the reaction 3-phosphoshikimate + phosphoenolpyruvate = 5-O-(1-carboxyvinyl)-3-phosphoshikimate + phosphate. It functions in the pathway metabolic intermediate biosynthesis; chorismate biosynthesis. In terms of biological role, catalyzes the transfer of the enolpyruvyl moiety of phosphoenolpyruvate (PEP) to the 5-hydroxyl of shikimate-3-phosphate (S3P) to produce enolpyruvyl shikimate-3-phosphate and inorganic phosphate. This is 3-phosphoshikimate 1-carboxyvinyltransferase from Methanopyrus kandleri (strain AV19 / DSM 6324 / JCM 9639 / NBRC 100938).